Here is a 394-residue protein sequence, read N- to C-terminus: Elongation factor Tu 1 (394 aa).

Residues 10–204 (KPHVNVGTIG…ALDTYIPEPA (195 aa)) enclose the tr-type G domain. Residues 19-26 (GHVDHGKT) form a G1 region. GTP is bound at residue 19–26 (GHVDHGKT). Threonine 26 serves as a coordination point for Mg(2+). Residues 60–64 (GITIN) are G2. A G3 region spans residues 81–84 (DCPG). GTP-binding positions include 81–85 (DCPGH) and 136–139 (NKCD). The G4 stretch occupies residues 136–139 (NKCD). The interval 174–176 (SAL) is G5.

The protein belongs to the TRAFAC class translation factor GTPase superfamily. Classic translation factor GTPase family. EF-Tu/EF-1A subfamily. As to quaternary structure, monomer.

It localises to the cytoplasm. It catalyses the reaction GTP + H2O = GDP + phosphate + H(+). In terms of biological role, GTP hydrolase that promotes the GTP-dependent binding of aminoacyl-tRNA to the A-site of ribosomes during protein biosynthesis. The polypeptide is Elongation factor Tu 1 (Shewanella frigidimarina (strain NCIMB 400)).